Consider the following 956-residue polypeptide: Glycine dehydrogenase (decarboxylating) 2 (956 aa).

The residue at position 706 (Lys706) is an N6-(pyridoxal phosphate)lysine.

It belongs to the GcvP family. As to quaternary structure, the glycine cleavage system is composed of four proteins: P, T, L and H. Pyridoxal 5'-phosphate is required as a cofactor.

The catalysed reaction is N(6)-[(R)-lipoyl]-L-lysyl-[glycine-cleavage complex H protein] + glycine + H(+) = N(6)-[(R)-S(8)-aminomethyldihydrolipoyl]-L-lysyl-[glycine-cleavage complex H protein] + CO2. The glycine cleavage system catalyzes the degradation of glycine. The P protein binds the alpha-amino group of glycine through its pyridoxal phosphate cofactor; CO(2) is released and the remaining methylamine moiety is then transferred to the lipoamide cofactor of the H protein. The chain is Glycine dehydrogenase (decarboxylating) 2 from Colwellia psychrerythraea (strain 34H / ATCC BAA-681) (Vibrio psychroerythus).